We begin with the raw amino-acid sequence, 851 residues long: Phosphatidate phosphatase LPIN3 (851 aa).

Positions 1–108 (MNYVGQLAET…VPPGLCTSPI (108 aa)) are N-LIP. Disordered stretches follow at residues 114-385 (SGFP…YLDD) and 400-432 (QSDS…EPTL). The segment covering 140–151 (GRRKRRRRRKPK) has biased composition (basic residues). Positions 141–148 (RRKRRRRR) match the Nuclear localization signal motif. Threonine 159 bears the Phosphothreonine mark. A phosphoserine mark is found at serine 161, serine 162, and serine 224. Low complexity predominate over residues 268–286 (GRAGATSPPRGGPSTPSTS). Residues 418–429 (SLRDPNPEHEPE) are compositionally biased toward basic and acidic residues. Residue serine 463 is modified to Phosphoserine. A compositionally biased stretch (basic and acidic residues) spans 542-559 (SAQKEKTAAKEQQGEKTE). The interval 542 to 591 (SAQKEKTAAKEQQGEKTEVLSSDDDAPDSPVILEIPSLPPSTPPSTPTYK) is disordered. Positions 578-587 (SLPPSTPPST) are enriched in pro residues. The interval 590–792 (YKKSLRLSSD…RIFTVNPRGE (203 aa)) is C-LIP. Positions 644–648 (DIDGT) match the DXDXT motif motif. The short motif at 655-659 (LGHIL) is the LXXIL motif element.

The protein belongs to the lipin family. It depends on Mg(2+) as a cofactor. As to expression, significant expression in intestine and other regions of the gastrointestinal tract.

It localises to the nucleus. The enzyme catalyses a 1,2-diacyl-sn-glycero-3-phosphate + H2O = a 1,2-diacyl-sn-glycerol + phosphate. Inhibited by N-ethylmaleimide. Functionally, magnesium-dependent phosphatidate phosphatase enzyme which catalyzes the conversion of phosphatidic acid to diacylglycerol during triglyceride, phosphatidylcholine and phosphatidylethanolamine biosynthesis therefore regulates fatty acid metabolism. The protein is Phosphatidate phosphatase LPIN3 of Homo sapiens (Human).